A 26-amino-acid chain; its full sequence is uncharacterized protein (26 aa).

Post-translationally, phosphorylated by YfhK.

In terms of biological role, probable member of a two-component regulatory system YfhA/YfhK. This is an uncharacterized protein from Klebsiella oxytoca.